Reading from the N-terminus, the 232-residue chain is Ubiquinone biosynthesis O-methyltransferase (232 aa).

The S-adenosyl-L-methionine site is built by Arg-36, Gly-55, Asp-76, and Met-120.

This sequence belongs to the methyltransferase superfamily. UbiG/COQ3 family.

It carries out the reaction a 3-demethylubiquinol + S-adenosyl-L-methionine = a ubiquinol + S-adenosyl-L-homocysteine + H(+). The enzyme catalyses a 3-(all-trans-polyprenyl)benzene-1,2-diol + S-adenosyl-L-methionine = a 2-methoxy-6-(all-trans-polyprenyl)phenol + S-adenosyl-L-homocysteine + H(+). It functions in the pathway cofactor biosynthesis; ubiquinone biosynthesis. O-methyltransferase that catalyzes the 2 O-methylation steps in the ubiquinone biosynthetic pathway. This Paraburkholderia phymatum (strain DSM 17167 / CIP 108236 / LMG 21445 / STM815) (Burkholderia phymatum) protein is Ubiquinone biosynthesis O-methyltransferase.